The primary structure comprises 595 residues: Estrogen receptor (595 aa).

Positions 1 to 184 (MTMTLHTKAS…AMESAKETRY (184 aa)) are modulating (transactivation AF-1); mediates interaction with MACROD1. A glycan (O-linked (GlcNAc) serine) is linked at S10. The segment at 35–47 (LERPLGEVYVDGS) is required for interaction with NCOA1. Residues 35–174 (LERPLGEVYV…LASTGDKGSM (140 aa)) are interaction with DDX5; self-association. S104 and S106 each carry phosphoserine; by CDK2. S118 is subject to Phosphoserine. The segment at 149-173 (FYRPTSDNRRQSGRERLASTGDKGS) is disordered. Basic and acidic residues predominate over residues 154–165 (SDNRRQSGRERL). S167 carries the phosphoserine; by CK2 modification. 2 consecutive NR C4-type zinc fingers follow at residues 185–205 (CAVCNDYASGYHYGVWSCEGC) and 221–245 (CPATNQCTIDKNRRKSCQACRLRKC). Residues 185–250 (CAVCNDYASG…RLRKCYEVGM (66 aa)) constitute a DNA-binding region (nuclear receptor). The tract at residues 185-310 (CAVCNDYASG…TKKNSPALSL (126 aa)) is mediates interaction with DNTTIP2. The interval 251-310 (MKGGIRKDRRGGRMLKHKRQRDEGEGRNEVGSSGDVRASNLWPSPLLIKHTKKNSPALSL) is hinge. Residues 257-269 (KDRRGGRMLKHKR) are compositionally biased toward basic residues. Residues 257–287 (KDRRGGRMLKHKRQRDEGEGRNEVGSSGDVR) form a disordered region. R260 bears the Asymmetric dimethylarginine; by PRMT1 mark. Residues 262–595 (GRMLKHKRQR…EEAGAFPTTV (334 aa)) form an interaction with AKAP13 region. Residues 264–595 (MLKHKRQRDE…EEAGAFPTTV (332 aa)) form a self-association region. The NR LBD domain occupies 311 to 547 (TADQMVSALL…DLLLEMLDAH (237 aa)). Residues 311-595 (TADQMVSALL…EEAGAFPTTV (285 aa)) are transactivation AF-2. The 17beta-estradiol site is built by E353 and R394. A lipid anchor (S-palmitoyl cysteine) is attached at C447. H524 contacts 17beta-estradiol. A Phosphotyrosine; by Tyr-kinases modification is found at Y537. O-linked (GlcNAc) threonine glycosylation is present at T571.

Belongs to the nuclear hormone receptor family. NR3 subfamily. As to quaternary structure, binds DNA as a homodimer. Can form a heterodimer with ESR2. Interacts with coactivator NCOA5. Interacts with PELP1, the interaction is enhanced by 17-beta-estradiol; the interaction increases ESR1 transcriptional activity. Interacts with NCOA7; the interaction is ligand-inducible. Interacts with AKAP13, CUEDC2, HEXIM1, KDM5A, MAP1S, SMARD1, and UBE1C. Interacts with MUC1; the interaction is stimulated by 7 beta-estradiol (E2) and enhances ESR1-mediated transcription. Interacts with DNTTIP2, and UIMC1. Interacts with KMT2D/MLL2. Interacts with ATAD2; the interaction is enhanced by estradiol. Interacts with KIF18A and LDB1. Interacts with RLIM (via its C-terminus). Interacts with MACROD1. Interacts with SH2D4A and PLCG. Interacts with SH2D4A; the interaction blocks binding to PLCG and inhibits estrogen-induced cell proliferation. Interacts with DYNLL1. Interacts with CCDC62; the interaction requires estradiol and appears to enhance the transcription of target genes. Interacts with NR2C1; the interaction prevents homodimerization of ESR1 and suppresses its transcriptional activity and cell growth. Interacts with DNAAF4. Interacts with PRMT2. Interacts with RBFOX2. Interacts with EP300; the interaction is estrogen-dependent and enhanced by CITED1. Interacts with CITED1; the interaction is estrogen-dependent. Interacts with FAM120B, FOXL2, PHB2 and SLC30A9. Interacts with coactivators NCOA3 and NCOA6. Interacts with STK3/MST2 only in the presence of SAV1 and vice-versa. Binds to CSNK1D. Interacts with NCOA2; NCOA2 can interact with ESR1 AF-1 and AF-2 domains simultaneously and mediate their transcriptional synergy. Interacts with DDX5. Interacts with NCOA1; the interaction seems to require a self-association of N-terminal and C-terminal regions. Interacts with ZNF366, DDX17, NFKB1, RELA, SP1 and SP3. Interacts with NRIP1. Interacts with GPER1; the interaction occurs in an estrogen-dependent manner. Interacts with CLOCK and the interaction is stimulated by estrogen. Interacts with TRIP4 (ufmylated); estrogen dependent. Interacts with LMTK3; the interaction phosphorylates ESR1 (in vitro) and protects it against proteasomal degradation. Interacts with CCAR2 (via N-terminus) in a ligand-independent manner. Interacts with ZFHX3. Interacts with SFR1 in a ligand-dependent and -independent manner. Interacts with DCAF13, LATS1 and DCAF1; regulates ESR1 ubiquitination and ubiquitin-mediated proteasomal degradation. Interacts (via DNA-binding domain) with POU4F2 (C-terminus); this interaction increases the estrogen receptor ESR1 transcriptional activity in a DNA- and ligand 17-beta-estradiol-independent manner. Interacts with ESRRB isoform 1. Interacts with UBE3A and WBP2. Interacts with GTF2B. Interacts with RBM39. In the absence of hormonal ligand, interacts with TACC1. Interacts with PI3KR1 or PI3KR2 and PTK2/FAK1. Interacts with SRC. Interacts with BAG1; the interaction is promoted in the absence of estradiol (17-beta-estradiol/E2). Interacts with and ubiquitinated by STUB1; the interaction is promoted in the absence of estradiol (17-beta-estradiol/E2). Interacts with NEDD8. Post-translationally, ubiquitinated; regulated by LATS1 via DCAF1 it leads to ESR1 proteasomal degradation. Deubiquitinated by OTUB1. Ubiquitinated by STUB1/CHIP; in the CA1 hippocampal region following loss of endogenous circulating estradiol (17-beta-estradiol/E2). Ubiquitinated by UBR5, leading to its degradation: UBR5 specifically recognizes and binds ligand-bound ESR1 when it is not associated with coactivators (NCOAs). In presence of NCOAs, the UBR5-degron is not accessible, preventing its ubiquitination and degradation. In terms of processing, phosphorylated by cyclin A/CDK2 and CK1. Phosphorylation probably enhances transcriptional activity. Dephosphorylation at Ser-118 by PPP5C inhibits its transactivation activity. Phosphorylated by LMTK3 (in vitro). Palmitoylated at Cys-447 by ZDHHC7 and ZDHHC21. Palmitoylation is required for plasma membrane targeting and for rapid intracellular signaling via ERK and AKT kinases and cAMP generation, but not for signaling mediated by the nuclear hormone receptor. Post-translationally, dimethylated by PRMT1 at Arg-260. The methylation may favor cytoplasmic localization. Demethylated by JMJD6 at Arg-260.

It is found in the nucleus. Its subcellular location is the cytoplasm. The protein localises to the golgi apparatus. The protein resides in the cell membrane. Functionally, nuclear hormone receptor. The steroid hormones and their receptors are involved in the regulation of eukaryotic gene expression and affect cellular proliferation and differentiation in target tissues. Ligand-dependent nuclear transactivation involves either direct homodimer binding to a palindromic estrogen response element (ERE) sequence or association with other DNA-binding transcription factors, such as AP-1/c-Jun, c-Fos, ATF-2, Sp1 and Sp3, to mediate ERE-independent signaling. Ligand binding induces a conformational change allowing subsequent or combinatorial association with multiprotein coactivator complexes through LXXLL motifs of their respective components. Mutual transrepression occurs between the estrogen receptor (ER) and NF-kappa-B in a cell-type specific manner. Decreases NF-kappa-B DNA-binding activity and inhibits NF-kappa-B-mediated transcription from the IL6 promoter and displace RELA/p65 and associated coregulators from the promoter. Recruited to the NF-kappa-B response element of the CCL2 and IL8 promoters and can displace CREBBP. Present with NF-kappa-B components RELA/p65 and NFKB1/p50 on ERE sequences. Can also act synergistically with NF-kappa-B to activate transcription involving respective recruitment adjacent response elements; the function involves CREBBP. Can activate the transcriptional activity of TFF1. Also mediates membrane-initiated estrogen signaling involving various kinase cascades. Essential for MTA1-mediated transcriptional regulation of BRCA1 and BCAS3. Maintains neuronal survival in response to ischemic reperfusion injury when in the presence of circulating estradiol (17-beta-estradiol/E2). This Felis catus (Cat) protein is Estrogen receptor (ESR1).